The sequence spans 370 residues: D-alanine--D-alanine ligase (370 aa).

The 207-residue stretch at lysine 142–glutamine 348 folds into the ATP-grasp domain. Glutamine 172–valine 227 provides a ligand contact to ATP. Positions 302, 315, and 317 each coordinate Mg(2+).

Belongs to the D-alanine--D-alanine ligase family. Mg(2+) serves as cofactor. Requires Mn(2+) as cofactor.

The protein resides in the cytoplasm. The enzyme catalyses 2 D-alanine + ATP = D-alanyl-D-alanine + ADP + phosphate + H(+). It participates in cell wall biogenesis; peptidoglycan biosynthesis. Functionally, cell wall formation. This chain is D-alanine--D-alanine ligase, found in Lactiplantibacillus plantarum (strain ATCC BAA-793 / NCIMB 8826 / WCFS1) (Lactobacillus plantarum).